Consider the following 74-residue polypeptide: uncharacterized protein (74 aa).

A helical transmembrane segment spans residues 7–26 (IHLYVMASAMSSSPIFFFFQ).

The protein localises to the membrane. This is an uncharacterized protein from Homo sapiens (Human).